Consider the following 225-residue polypeptide: C-reactive protein (225 aa).

A signal peptide spans 1–20 (MEKLLWCFLTLVSFSNMSDQ). Residues 24–225 (HKKAFVFPKE…EVHVKPQLWP (202 aa)) form the Pentraxin (PTX) domain. Cys55 and Cys116 are disulfide-bonded. Ca(2+)-binding residues include Asn80, Gln158, Asp159, and Gln169.

Belongs to the pentraxin family. Homopentamer. Pentraxin (or pentaxin) have a discoid arrangement of 5 non-covalently bound subunits. Interacts with FCN1; may regulate monocyte activation by FCN1. It depends on Ca(2+) as a cofactor. As to expression, found in plasma.

Its subcellular location is the secreted. Its function is as follows. Displays several functions associated with host defense: it promotes agglutination, bacterial capsular swelling, phagocytosis and complement fixation through its calcium-dependent binding to phosphorylcholine. Can interact with DNA and histones and may scavenge nuclear material released from damaged circulating cells. The sequence is that of C-reactive protein (CRP) from Oryctolagus cuniculus (Rabbit).